Here is a 186-residue protein sequence, read N- to C-terminus: CASP-like protein 4C2 (186 aa).

The Cytoplasmic segment spans residues 1 to 31 (MRSPQPHRSGGDTQQHFQSTVSVQKLKRFNS). The helical transmembrane segment at 32 to 52 (LILVFRFAAFCFSLASAVFML) threads the bilayer. Residues 53 to 71 (TNSRGSDSLHWYNFDAFRY) are Extracellular-facing. A helical transmembrane segment spans residues 72–92 (VFAANAIVAIYSLFEMAASVW). Residues 93-103 (EISRNATLFPE) are Cytoplasmic-facing. A helical membrane pass occupies residues 104–124 (ICQVWFDFGHDQVFAYLLLSA). Topologically, residues 125–150 (NTAGTELARTLKDTCTDNKAFCVQSD) are extracellular. The helical transmembrane segment at 151-171 (IAIVLGFAGFLFLGISSLFSG) threads the bilayer. Residues 172–186 (FRVVCFIINGSRFYV) lie on the Cytoplasmic side of the membrane.

Belongs to the Casparian strip membrane proteins (CASP) family. In terms of assembly, homodimer and heterodimers.

It is found in the cell membrane. This Populus trichocarpa (Western balsam poplar) protein is CASP-like protein 4C2.